The following is a 137-amino-acid chain: Large ribosomal subunit protein uL16 (137 aa).

Belongs to the universal ribosomal protein uL16 family. As to quaternary structure, part of the 50S ribosomal subunit.

Functionally, binds 23S rRNA and is also seen to make contacts with the A and possibly P site tRNAs. In Streptococcus suis (strain 98HAH33), this protein is Large ribosomal subunit protein uL16.